A 372-amino-acid polypeptide reads, in one-letter code: Glutamate 5-kinase (372 aa).

An ATP-binding site is contributed by Lys-14. Substrate-binding residues include Ser-54, Asp-141, and Asn-153. Residue 173–174 participates in ATP binding; that stretch reads TD. One can recognise a PUA domain in the interval 280–358; that stretch reads RGTLVLDAGA…DAIEKLLGYV (79 aa).

This sequence belongs to the glutamate 5-kinase family.

Its subcellular location is the cytoplasm. It catalyses the reaction L-glutamate + ATP = L-glutamyl 5-phosphate + ADP. It participates in amino-acid biosynthesis; L-proline biosynthesis; L-glutamate 5-semialdehyde from L-glutamate: step 1/2. Functionally, catalyzes the transfer of a phosphate group to glutamate to form L-glutamate 5-phosphate. The sequence is that of Glutamate 5-kinase from Ectopseudomonas mendocina (strain ymp) (Pseudomonas mendocina).